A 518-amino-acid polypeptide reads, in one-letter code: MAKITELDHHLNQEKEALDKVVSNLNELCEHNQKLQGFIEIQKEVKELKKEHIKSLSWFKKLINTVSNIKYVFVKSEEQLAKDAIEQNNKLLKRIDNTILSVADKSGPLKQELQKELRKNFENLAKKDLSKDQRERLSNLLNNEYAANPQKFAQLPMSKPLHFPNAEELENQHNDLKVIQQNVLNLLTENSNIEELKKIQKQVAEIREEVPFTKLEKLNNFWQKIKNIFVNNSEQVLAKNKENNTKTIINIEEKLHKANNKFFELVSNKKQDIENIISNLPDSKRLEAIKEKLQKHINVKDTNNIAEQASAAQLQSAETKPTAVVLPNNAIPTTPPVTEEKTFTPPPAPPPPMPTDNIPTPLPVSKAEATEHKNVETAASNVPPPPPPPMPTGNVPPPPPVGDNTVTSTPQKAKETNQPRPAVDTTNLMKQIQGGFNLKKIEYGEDGKPIPKNKEDTKETSDPIIAALNKIRSAKVSSDSERSNSDSGTDSGWASDVSTRSKKVLTRRERNAKQSQQR.

The tract at residues 310–518 (SAAQLQSAET…ERNAKQSQQR (209 aa)) is disordered. 2 stretches are compositionally biased toward pro residues: residues 344–354 (TPPPAPPPPMP) and 382–401 (VPPP…PPPV). The span at 418–430 (QPRPAVDTTNLMK) shows a compositional bias: polar residues. The region spanning 424 to 441 (DTTNLMKQIQGGFNLKKI) is the WH2 domain. The span at 439–461 (KKIEYGEDGKPIPKNKEDTKETS) shows a compositional bias: basic and acidic residues. The span at 488–498 (GTDSGWASDVS) shows a compositional bias: polar residues.

Homodimer.

Its subcellular location is the cell surface. Its function is as follows. Recruits and activates the Arp2/3 complex, which in turn leads to actin polymerization, promoting Rickettsia motility during infection. In Rickettsia bellii (strain RML369-C), this protein is Arp2/3 complex-activating protein rickA (rickA).